The primary structure comprises 483 residues: Putative inorganic phosphate cotransporter (483 aa).

7 consecutive transmembrane segments (helical) span residues 64–84 (YILSSFFYGYVITQIPFGILA), 90–110 (LRFLGYGMLINSVFAFLVPVA), 187–207 (IFYVFGIVGTVWSIAFLIFVY), 292–312 (LPYLAMWLLSMFISVIADWMI), 349–369 (ALTLAILTIGVGLNGGIYSGF), 383–403 (FLMSITNCSANLAGLLAPIAA), and 420–440 (IVFFIAAFVYIICGTFYNIFG). The segment at 447 to 483 (WDNPSEDEQKPALESSSTTNPPRLSNGSSAPRAISSS) is disordered. Residues 460–483 (ESSSTTNPPRLSNGSSAPRAISSS) are compositionally biased toward polar residues.

The protein belongs to the major facilitator superfamily. Sodium/anion cotransporter family.

Its subcellular location is the membrane. May be an inorganic phosphate cotransporter. This chain is Putative inorganic phosphate cotransporter (Picot), found in Drosophila ananassae (Fruit fly).